The following is a 289-amino-acid chain: Rhodopsin (289 aa).

Topologically, residues 1–7 are extracellular; the sequence is YLVNPAG. A helical transmembrane segment spans residues 8 to 32; it reads YAALGAYMFLLILIGSPVNFLTLYV. Residues 33-44 are Cytoplasmic-facing; it reads TLEHKKLRTPLN. The chain crosses the membrane as a helical span at residues 45–67; sequence YILLNLAVADLFMVLGGFTTTMY. The Extracellular segment spans residues 68 to 81; sequence TSMHGYSVLGRLGC. A disulfide bridge links cysteine 81 with cysteine 158. A helical transmembrane segment spans residues 82–104; it reads ILEGFFATLGGEIALWSLVVLAI. A 'Ionic lock' involved in activated form stabilization motif is present at residues 105 to 107; sequence ERW. At 105 to 123 the chain is on the cytoplasmic side; sequence ERWIVVCKPISNFRFTEDH. A helical transmembrane segment spans residues 124–144; it reads AIMGLAFSWVMALACAVPPLV. Topologically, residues 145–173 are extracellular; it reads GWSRYIPEGMQCSCGVDYYTRAEGFNNES. An N-linked (GlcNAc...) asparagine glycan is attached at asparagine 171. A helical transmembrane segment spans residues 174 to 195; the sequence is FVIYMFIVHFLIPLSVIFFCYG. The Cytoplasmic segment spans residues 196-223; the sequence is RLLCAVKEAAAAQQESETTQRPEKEVTR. The helical transmembrane segment at 224 to 245 threads the bilayer; the sequence is MVVIMVIAFLVCCLPNASVAWW. At 246–257 the chain is on the extracellular side; sequence IFCNQGSDFGPI. The chain crosses the membrane as a helical span at residues 258 to 279; it reads FMTLPSFFAKSAAIYNPMIYIC. Lysine 267 carries the post-translational modification N6-(retinylidene)lysine. Over 280 to 289 the chain is Cytoplasmic; that stretch reads MNKQFRHCMI.

The protein belongs to the G-protein coupled receptor 1 family. Opsin subfamily. Phosphorylated on some or all of the serine and threonine residues present in the C-terminal region. In terms of processing, contains one covalently linked retinal chromophore.

The protein resides in the membrane. Its subcellular location is the cell projection. The protein localises to the cilium. It localises to the photoreceptor outer segment. Photoreceptor required for image-forming vision at low light intensity. While most salt water fish species use retinal as chromophore, most freshwater fish use 3-dehydroretinal, or a mixture of retinal and 3-dehydroretinal. Light-induced isomerization of 11-cis to all-trans retinal triggers a conformational change that activates signaling via G-proteins. Subsequent receptor phosphorylation mediates displacement of the bound G-protein alpha subunit by arrestin and terminates signaling. The polypeptide is Rhodopsin (rho) (Limnocottus bergianus).